The chain runs to 337 residues: GTPase Obg (337 aa).

The region spanning 1-158 (MFIDEVRILV…KRLRLELKLL (158 aa)) is the Obg domain. Basic and acidic residues-rich tracts occupy residues 61 to 74 (NPEH…HGEG) and 137 to 146 (PTEHEPGRPG). Disordered regions lie at residues 61 to 83 (NPEH…AEGR) and 119 to 146 (GGRG…GRPG). An OBG-type G domain is found at 159–330 (ADVGLVGFPN…LKHAMADRVL (172 aa)). Residues 165-172 (GFPNAGKS), 190-194 (FTTLE), 212-215 (DIPG), 282-285 (TKMD), and 311-313 (SSA) contribute to the GTP site. Positions 172 and 192 each coordinate Mg(2+).

The protein belongs to the TRAFAC class OBG-HflX-like GTPase superfamily. OBG GTPase family. As to quaternary structure, monomer. Mg(2+) serves as cofactor.

It localises to the cytoplasm. Its function is as follows. An essential GTPase which binds GTP, GDP and possibly (p)ppGpp with moderate affinity, with high nucleotide exchange rates and a fairly low GTP hydrolysis rate. Plays a role in control of the cell cycle, stress response, ribosome biogenesis and in those bacteria that undergo differentiation, in morphogenesis control. The chain is GTPase Obg from Solibacter usitatus (strain Ellin6076).